A 638-amino-acid chain; its full sequence is Golgi integral membrane protein 4 (638 aa).

The Cytoplasmic segment spans residues 1 to 12 (MGNGMCSRRQKR). The chain crosses the membrane as a helical; Signal-anchor for type II membrane protein span at residues 13–33 (IFQALACLAVAIGFVYGAMLN). Over 34-638 (YHLQNDLKKA…GVKNKRRAEM (605 aa)) the chain is Lumenal. Golgi targeting stretches follow at residues 38–107 (NDLK…RQDS) and 176–220 (YNLR…SSLR). Positions 66–216 (EHRSRLEKSL…VQLKKALNKM (151 aa)) form a coiled coil. Residues 80–175 (LEHKKAKEDF…QEHSKLKESI (96 aa)) are endosome targeting. Disordered stretches follow at residues 217 to 245 (SSLR…EHAT), 280 to 415 (RVKT…QQDL), and 455 to 638 (KQAE…RAEM). Basic and acidic residues-rich tracts occupy residues 301–316 (ATEH…KKEL) and 323–332 (QVGKPERLVE). A compositionally biased stretch (acidic residues) spans 348-361 (EDDALEGNNEEQKE). Basic and acidic residues-rich tracts occupy residues 402–414 (QMEE…EQQD), 455–467 (KQAE…HDIV), and 510–521 (AESREGQEKAAA). Acidic residues-rich tracts occupy residues 534–553 (GEDE…PDEN) and 577–593 (QQED…EEEE). Over residues 594–615 (RQIGAEREPDAQQEENKERNEE) the composition is skewed to basic and acidic residues. Residues 616–626 (NYEEEEEEEDG) are compositionally biased toward acidic residues.

It belongs to the GOLIM4 family.

It localises to the golgi apparatus. Its subcellular location is the golgi stack membrane. The protein resides in the endosome membrane. In terms of biological role, may play a role in endosome to Golgi protein trafficking. The sequence is that of Golgi integral membrane protein 4 (golim4) from Xenopus tropicalis (Western clawed frog).